An 81-amino-acid chain; its full sequence is Cysteine-rich and transmembrane domain-containing protein PCC1 (81 aa).

Residues 1–22 (MNQSAQNYFSVQKPSETSSGPY) show a composition bias toward polar residues. The segment at 1–34 (MNQSAQNYFSVQKPSETSSGPYTSPPPIGYPTRD) is disordered. The helical transmembrane segment at 56–74 (AIMSCFSTCMECIFCCGVC) threads the bilayer.

The protein belongs to the CYSTM1 family. In terms of tissue distribution, expressed at very low levels in seedlings and petioles, and at higher levels in leaves. Also present in phloem sap.

It localises to the cell membrane. Functionally, modulates resistance against pathogens including oomycetes (e.g. Hyaloperonospora parasitica and Phytophthora brassicae) and fungi (e.g. Phytophthora brassicae). Controls the abscisic acid-mediated (ABA) signaling pathways. Regulator of the flowering time in response to stress (e.g. UV-C). Regulates polar lipid content; promotes phosphatidylinositol (PI) and 18:0 but prevents 18:2 and 18:3 polar lipids accumulation. In Arabidopsis thaliana (Mouse-ear cress), this protein is Cysteine-rich and transmembrane domain-containing protein PCC1 (PCC1).